The sequence spans 304 residues: CBY1-interacting BAR domain-containing protein 2 (304 aa).

Residues Ser6–Leu217 are BAR-like.

This sequence belongs to the CIBAR family. As to quaternary structure, homodimer (via BAR-like domain). Heterodimer (via BAR-like domain) with FAM92A. Interacts with CBY1. In terms of tissue distribution, restricted to certain tissues, most prominently expressed in multicilaited tissues.

It is found in the cytoplasm. The protein resides in the cytoskeleton. It localises to the microtubule organizing center. Its subcellular location is the centrosome. The protein localises to the centriole. It is found in the cilium basal body. May play a role in ciliogenesis. In cooperation with CBY1 may facilitate ciliogenesis likely by the recruitment and fusion of endosomal vesicles at distal appendages during early stages of ciliogenesis. This is CBY1-interacting BAR domain-containing protein 2 from Homo sapiens (Human).